The sequence spans 32 residues: MSDIN-like toxin proprotein 3 (32 aa).

A propeptide spanning residues 1 to 10 (MSDINATRLP) is cleaved from the precursor. A cross-link (cyclopeptide (Ser-Pro)) is located at residues 11–17 (SFFFPIP). Residues 18–32 (CISDDIEMVLTRGER) constitute a propeptide that is removed on maturation.

Belongs to the MSDIN fungal toxin family. Post-translationally, processed by the macrocyclase-peptidase enzyme POPB to yield a toxic cyclic heptapeptide. POPB first removes 10 residues from the N-terminus. Conformational trapping of the remaining peptide forces the enzyme to release this intermediate rather than proceed to macrocyclization. The enzyme rebinds the remaining peptide in a different conformation and catalyzes macrocyclization of the N-terminal 8 residues.

Functionally, probable toxin that belongs to the MSDIN-like toxin family responsible for a large number of food poisoning cases and deaths. The protein is MSDIN-like toxin proprotein 3 of Amanita phalloides (Death cap).